The chain runs to 408 residues: Echinulin prenyltransferase 2 (408 aa).

10 residues coordinate dimethylallyl diphosphate: arginine 94, lysine 181, tyrosine 183, arginine 248, lysine 250, tyrosine 252, glutamine 334, tyrosine 336, tyrosine 400, and tyrosine 404.

This sequence belongs to the tryptophan dimethylallyltransferase family.

The enzyme catalyses preechinulin + dimethylallyl diphosphate = tardioxopiperazine B + diphosphate. It carries out the reaction preechinulin + dimethylallyl diphosphate = tardioxopiperazine A + diphosphate. The catalysed reaction is tardioxopiperazine A + dimethylallyl diphosphate = echinulin + diphosphate. It catalyses the reaction tardioxopiperazine A + dimethylallyl diphosphate = variecolorin L + diphosphate. The enzyme catalyses neoechinulin A + dimethylallyl diphosphate = variecolorin G + diphosphate. It carries out the reaction neoechinulin A + dimethylallyl diphosphate = isoechinulin A + diphosphate. The catalysed reaction is isoechinulin A + dimethylallyl diphosphate = dehydroechinulin + diphosphate. It catalyses the reaction neoechinulin B + dimethylallyl diphosphate = isoechinulin B + diphosphate. It functions in the pathway secondary metabolite biosynthesis. It participates in alkaloid biosynthesis. Its function is as follows. Prenyltransferase; part of the gene cluster that mediates the biosynthesis of echinulin family alkaloid. The pathway begins with the biosynthesis of the cyclic dipeptide cyclo-L-Trp-L-Ala (cyclo-TA) by the NRPS echPS via condensation of L-alanine and L-tryptophan. The prenyltransferase echPT1 then catalyzes the first prenylation step, a reverse prenylation reaction at C2, to yield preechinulin. Preechinulin is the substrate of the cytochrome P450 monooxygenase echP450 that catalyzes the formation of the double bond between C10 and C11 to produce neoechulin A. The unique prenyltransferase echPT2 functions as a competitive enzyme with echP450 for preechinulin metabolization and uses preechinulin for effective regiospecific prenylations. Preechinulin is prenylated by echPT2 at C5 or C7. C7-prenylation leads to accumulation of tardioxopiperazine B without further modification by echPT2. In contrast, the C5-prenylated tardioxopiperazine A can be prenylated again by echPT2, predominantly at C7 to form echinulin or less frequently at C4 to give variecolorin L. EchPT2 also accepts neoechilunin A to produce varlecolorin G (prenylation at C5) or isoechinulin A (prenylation at C7). EchPT2 further converts isoechinulin A into dehydroechinulin. Moreover, a yet unidentified enzyme can also convert neoechilunin A into neoechilunin B by introducing a double bond between positions C14 and C17 and thus provides a further substrate to echPT2 for C5 and C7 prenylation. The sequence is that of Echinulin prenyltransferase 2 from Aspergillus ruber (Eurotium rubrum).